A 146-amino-acid chain; its full sequence is Large ribosomal subunit protein uL15 (146 aa).

The interval 1-54 (MNLTDLRPADGSKQSGNFRRGRGHGSGNGKTAGKGHKGQKARSGAPRVGFEGGQ) is disordered.

Belongs to the universal ribosomal protein uL15 family. In terms of assembly, part of the 50S ribosomal subunit.

Functionally, binds to the 23S rRNA. The polypeptide is Large ribosomal subunit protein uL15 (Lachnoclostridium phytofermentans (strain ATCC 700394 / DSM 18823 / ISDg) (Clostridium phytofermentans)).